The chain runs to 313 residues: tRNA dimethylallyltransferase (313 aa).

11-18 is a binding site for ATP; the sequence is GPTASGKT. 13–18 is a binding site for substrate; that stretch reads TASGKT. 3 interaction with substrate tRNA regions span residues 36–39, 160–164, and 241–246; these read DSAL, QRINR, and RCVGYR.

Belongs to the IPP transferase family. Monomer. It depends on Mg(2+) as a cofactor.

The enzyme catalyses adenosine(37) in tRNA + dimethylallyl diphosphate = N(6)-dimethylallyladenosine(37) in tRNA + diphosphate. Functionally, catalyzes the transfer of a dimethylallyl group onto the adenine at position 37 in tRNAs that read codons beginning with uridine, leading to the formation of N6-(dimethylallyl)adenosine (i(6)A). This is tRNA dimethylallyltransferase from Haemophilus ducreyi (strain 35000HP / ATCC 700724).